The following is a 305-amino-acid chain: uncharacterized protein (305 aa).

Residues 267–287 are disordered; sequence ADEQEKNWNGGAKKNARAEPA.

This sequence belongs to the DnaB/DnaD family.

This is an uncharacterized protein from Listeria innocua serovar 6a (strain ATCC BAA-680 / CLIP 11262).